The sequence spans 127 residues: Large ribosomal subunit protein bL17 (127 aa).

The protein belongs to the bacterial ribosomal protein bL17 family. As to quaternary structure, part of the 50S ribosomal subunit. Contacts protein L32.

This is Large ribosomal subunit protein bL17 from Haemophilus ducreyi (strain 35000HP / ATCC 700724).